The primary structure comprises 198 residues: Glycerol-3-phosphate acyltransferase (198 aa).

The next 5 helical transmembrane spans lie at 6–26, 56–78, 83–101, 113–133, and 155–175; these read FLPV…GLVL, LAAG…AGYI, AAMA…PVWL, IGIL…LWLA, and FLWW…TLLL.

It belongs to the PlsY family. As to quaternary structure, probably interacts with PlsX.

The protein localises to the cell inner membrane. The enzyme catalyses an acyl phosphate + sn-glycerol 3-phosphate = a 1-acyl-sn-glycero-3-phosphate + phosphate. The protein operates within lipid metabolism; phospholipid metabolism. Functionally, catalyzes the transfer of an acyl group from acyl-phosphate (acyl-PO(4)) to glycerol-3-phosphate (G3P) to form lysophosphatidic acid (LPA). This enzyme utilizes acyl-phosphate as fatty acyl donor, but not acyl-CoA or acyl-ACP. This chain is Glycerol-3-phosphate acyltransferase, found in Bradyrhizobium diazoefficiens (strain JCM 10833 / BCRC 13528 / IAM 13628 / NBRC 14792 / USDA 110).